Reading from the N-terminus, the 149-residue chain is MGSPIAASFLLFLAVQLLGQTGANPVYGSVSNADLLDFKNLLDRLEDKMPLEDEAESPQALSEQNAEAGAALSPLPEVPPWTGEVSPAQRDGGALGRSPWDSSDRSALLKSKLRALLAAPRSLRRSSCFGGRMDRIGAQSGLGCNSFRY.

The signal sequence occupies residues 1 to 23; that stretch reads MGSPIAASFLLFLAVQLLGQTGA. 2 consecutive propeptides follow at residues 24-121 and 91-101; these read NPVY…AAPR and DGGALGRSPWD. Positions 49 to 103 are disordered; that stretch reads MPLEDEAESPQALSEQNAEAGAALSPLPEVPPWTGEVSPAQRDGGALGRSPWDSS. Position 127 is a phosphoserine (serine 127). The cysteines at positions 128 and 144 are disulfide-linked. Residues 145–149 form an important for degradation of atrial natriuretic peptide by IDE region; the sequence is NSFRY.

The protein belongs to the natriuretic peptide family. As to quaternary structure, homodimer; disulfide-linked antiparallel dimer. Post-translationally, the precursor molecule is proteolytically cleaved by CORIN at Arg-121 to produce the atrial natriuretic peptide. Undergoes further proteolytic cleavage by unknown proteases to give rise to long-acting natriuretic peptide, vessel dilator and kaliuretic peptide. Additional processing gives rise to the auriculin and atriopeptin peptides. In the kidneys, alternative processing by an unknown protease results in the peptide urodilatin. In terms of processing, cleavage by MME initiates degradation of the factor and thereby regulates its activity. Degradation by IDE results in reduced activation of NPR1 (in vitro). During IDE degradation, the resulting products can temporarily stimulate NPR2 to produce cGMP, before the fragments are completely degraded and inactivated by IDE (in vitro). Degraded by IDE. Post-translationally, phosphorylation on Ser-127 decreases vasorelaxant activity.

It localises to the secreted. The protein resides in the perikaryon. It is found in the cell projection. Functionally, hormone that plays a key role in mediating cardio-renal homeostasis, and is involved in vascular remodeling and regulating energy metabolism. Acts by specifically binding and stimulating NPR1 to produce cGMP, which in turn activates effector proteins, such as PRKG1, that drive various biological responses. Regulates vasodilation, natriuresis, diuresis and aldosterone synthesis and is therefore essential for regulating blood pressure, controlling the extracellular fluid volume and maintaining the fluid-electrolyte balance. Also involved in inhibiting cardiac remodeling and cardiac hypertrophy by inducing cardiomyocyte apoptosis and attenuating the growth of cardiomyocytes and fibroblasts. Plays a role in female pregnancy by promoting trophoblast invasion and spiral artery remodeling in uterus, and thus prevents pregnancy-induced hypertension. In adipose tissue, acts in various cGMP- and PKG-dependent pathways to regulate lipid metabolism and energy homeostasis. This includes up-regulating lipid metabolism and mitochondrial oxygen utilization by activating the AMP-activated protein kinase (AMPK), and increasing energy expenditure by acting via MAPK11 to promote the UCP1-dependent thermogenesis of brown adipose tissue. Binds the clearance receptor NPR3 which removes the hormone from circulation. In terms of biological role, may have a role in cardio-renal homeostasis through regulation of natriuresis, diuresis, vasodilation, and inhibiting aldosterone synthesis. In vitro, promotes the production of cGMP and induces vasodilation. May promote natriuresis, at least in part, by enhancing prostaglandin E2 synthesis resulting in the inhibition of renal Na+-K+-ATPase. However reports on the involvement of this peptide in mammal blood volume and blood pressure homeostasis are conflicting; according to a report, in vivo it is not sufficient to activate cGMP and does not inhibit collecting duct transport nor effect diuresis and natriuresis. Appears to bind to specific receptors that are distinct from the receptors bound by atrial natriuretic peptide and vessel dilator. Possibly enhances protein excretion in urine by decreasing proximal tubular protein reabsorption. May have a role in cardio-renal homeostasis through regulation of natriuresis, diuresis, and vasodilation. In vitro, promotes the production of cGMP and induces vasodilation. May promote natriuresis, at least in part, by enhancing prostaglandin E2 synthesis resulting in the inhibition of renal Na+-K+-ATPase. However reports on the involvement of this peptide in mammal blood volume and blood pressure homeostasis are conflicting; according to a report it is not sufficient to activate cGMP and does not inhibit collecting duct transport nor effect diuresis and natriuresis. Appears to bind to specific receptors that are distinct from the receptors bound by the atrial natriuretic and long-acting natriuretic peptides. Possibly functions in protein excretion in urine by maintaining the integrity of the proximal tubules and enhancing protein excretion by decreasing proximal tubular protein reabsorption. Its function is as follows. May have a role in cardio-renal homeostasis through regulation of diuresis and inhibiting aldosterone synthesis. In vitro, promotes the production of cGMP and induces vasodilation. May promote natriuresis, at least in part, by enhancing prostaglandin E2 synthesis resulting in the inhibition of renal Na+-K+-ATPase. May have a role in potassium excretion but not sodium excretion (natriuresis). Possibly enhances protein excretion in urine by decreasing proximal tubular protein reabsorption. Functionally, hormone produced in the kidneys that appears to be important for maintaining cardio-renal homeostasis. Mediates vasodilation, natriuresis and diuresis primarily in the renal system, in order to maintain the extracellular fluid volume and control the fluid-electrolyte balance. Specifically binds and stimulates cGMP production by renal transmembrane receptors, likely NPR1. Urodilatin not ANP, may be the natriuretic peptide responsible for the regulation of sodium and water homeostasis in the kidney. In terms of biological role, may have a role in cardio-renal homeostasis through regulation of natriuresis and vasodilation. In vivo promotes natriuresis and in vitro, vasodilates renal artery strips. May have a role in cardio-renal homeostasis through regulation of regulation of natriuresis and vasodilation. In vivo promotes natriuresis. In vitro, vasodilates intestinal smooth muscle but not smooth muscle strips. Its function is as follows. May have a role in cardio-renal homeostasis through regulation of natriuresis and vasodilation. In vivo promotes natriuresis. In vitro, selectively vasodilates intestinal and vascular smooth muscle strips. Functionally, may have a role in cardio-renal homeostasis through regulation of natriuresis and vasodilation. In vivo promotes natriuresis. In vitro, selectively vasodilates intestinal smooth muscle but not vascular smooth muscle strips. This chain is Natriuretic peptides A (NPPA), found in Canis lupus familiaris (Dog).